The following is a 360-amino-acid chain: 3-isopropylmalate dehydrogenase (360 aa).

76–89 contacts NAD(+); the sequence is GPKWDKLDMAIRPE. Substrate contacts are provided by Arg-96, Arg-106, Arg-134, and Asp-224. Positions 224, 248, and 252 each coordinate Mg(2+). 282–294 contributes to the NAD(+) binding site; it reads GSAPDIAGQNMAN.

It belongs to the isocitrate and isopropylmalate dehydrogenases family. LeuB type 1 subfamily. In terms of assembly, homodimer. It depends on Mg(2+) as a cofactor. Mn(2+) serves as cofactor.

Its subcellular location is the cytoplasm. The catalysed reaction is (2R,3S)-3-isopropylmalate + NAD(+) = 4-methyl-2-oxopentanoate + CO2 + NADH. It functions in the pathway amino-acid biosynthesis; L-leucine biosynthesis; L-leucine from 3-methyl-2-oxobutanoate: step 3/4. Its function is as follows. Catalyzes the oxidation of 3-carboxy-2-hydroxy-4-methylpentanoate (3-isopropylmalate) to 3-carboxy-4-methyl-2-oxopentanoate. The product decarboxylates to 4-methyl-2 oxopentanoate. The polypeptide is 3-isopropylmalate dehydrogenase (Hahella chejuensis (strain KCTC 2396)).